The chain runs to 201 residues: HTH-type transcriptional regulator Hpr (201 aa).

Residues 13–157 form the HTH marR-type domain; that stretch reads AMLFSQRIAQ…MMCIIRNIYG (145 aa). The segment at residues 63–86 is a DNA-binding region (H-T-H motif); the sequence is ISEIAKFGVMHVSTAFNFSKKLEE.

In terms of assembly, homodimer.

Negative regulator of protease production and sporulation. The polypeptide is HTH-type transcriptional regulator Hpr (Geobacillus sp. (strain WCH70)).